A 510-amino-acid polypeptide reads, in one-letter code: Inositol-3-phosphate synthase (510 aa).

Residues Gly-70, Gly-71, Asn-72, Asn-73, Asp-143, Ile-180, Gln-190, Arg-193, Thr-230, Ala-231, Asn-232, Thr-233, Gly-281, Ser-282, Asp-306, Ser-309, Asn-340, Asn-341, Asp-342, Lys-355, Gly-393, Asp-394, Asp-422, and Ser-423 each coordinate NAD(+).

The protein belongs to the myo-inositol 1-phosphate synthase family. Requires NAD(+) as cofactor.

It is found in the cytoplasm. It localises to the cytosol. The protein resides in the nucleus. The catalysed reaction is D-glucose 6-phosphate = 1D-myo-inositol 3-phosphate. It functions in the pathway polyol metabolism; myo-inositol biosynthesis; myo-inositol from D-glucose 6-phosphate: step 1/2. Key enzyme in myo-inositol biosynthesis pathway that catalyzes the conversion of glucose 6-phosphate to 1-myo-inositol 1-phosphate in a NAD-dependent manner. This is Inositol-3-phosphate synthase from Hordeum vulgare (Barley).